The chain runs to 116 residues: Ribosome-binding factor A (116 aa).

It belongs to the RbfA family. Monomer. Binds 30S ribosomal subunits, but not 50S ribosomal subunits or 70S ribosomes.

It is found in the cytoplasm. Its function is as follows. One of several proteins that assist in the late maturation steps of the functional core of the 30S ribosomal subunit. Associates with free 30S ribosomal subunits (but not with 30S subunits that are part of 70S ribosomes or polysomes). Required for efficient processing of 16S rRNA. May interact with the 5'-terminal helix region of 16S rRNA. This chain is Ribosome-binding factor A, found in Streptococcus mutans serotype c (strain ATCC 700610 / UA159).